Consider the following 610-residue polypeptide: Dihydroxy-acid dehydratase (610 aa).

A Mg(2+)-binding site is contributed by Asp81. [2Fe-2S] cluster is bound at residue Cys122. Residues Asp123 and Lys124 each contribute to the Mg(2+) site. The residue at position 124 (Lys124) is an N6-carboxylysine. Cys193 serves as a coordination point for [2Fe-2S] cluster. Glu489 serves as a coordination point for Mg(2+). Ser515 serves as the catalytic Proton acceptor.

This sequence belongs to the IlvD/Edd family. Homodimer. [2Fe-2S] cluster serves as cofactor. Mg(2+) is required as a cofactor.

The catalysed reaction is (2R)-2,3-dihydroxy-3-methylbutanoate = 3-methyl-2-oxobutanoate + H2O. The enzyme catalyses (2R,3R)-2,3-dihydroxy-3-methylpentanoate = (S)-3-methyl-2-oxopentanoate + H2O. Its pathway is amino-acid biosynthesis; L-isoleucine biosynthesis; L-isoleucine from 2-oxobutanoate: step 3/4. The protein operates within amino-acid biosynthesis; L-valine biosynthesis; L-valine from pyruvate: step 3/4. Functions in the biosynthesis of branched-chain amino acids. Catalyzes the dehydration of (2R,3R)-2,3-dihydroxy-3-methylpentanoate (2,3-dihydroxy-3-methylvalerate) into 2-oxo-3-methylpentanoate (2-oxo-3-methylvalerate) and of (2R)-2,3-dihydroxy-3-methylbutanoate (2,3-dihydroxyisovalerate) into 2-oxo-3-methylbutanoate (2-oxoisovalerate), the penultimate precursor to L-isoleucine and L-valine, respectively. The protein is Dihydroxy-acid dehydratase of Xylella fastidiosa (strain 9a5c).